Reading from the N-terminus, the 190-residue chain is Threonylcarbamoyl-AMP synthase (190 aa).

In terms of domain architecture, YrdC-like spans 7 to 190 (LSSLIKCIRK…IVNGKLIRYV (184 aa)).

This sequence belongs to the SUA5 family. TsaC subfamily.

The protein localises to the cytoplasm. It catalyses the reaction L-threonine + hydrogencarbonate + ATP = L-threonylcarbamoyladenylate + diphosphate + H2O. In terms of biological role, required for the formation of a threonylcarbamoyl group on adenosine at position 37 (t(6)A37) in tRNAs that read codons beginning with adenine. Catalyzes the conversion of L-threonine, HCO(3)(-)/CO(2) and ATP to give threonylcarbamoyl-AMP (TC-AMP) as the acyladenylate intermediate, with the release of diphosphate. The polypeptide is Threonylcarbamoyl-AMP synthase (Buchnera aphidicola subsp. Schizaphis graminum (strain Sg)).